The primary structure comprises 574 residues: Urease subunit alpha (574 aa).

One can recognise a Urease domain in the interval Gly131–Leu574. Ni(2+)-binding residues include His136, His138, and Lys219. Lys219 carries the N6-carboxylysine modification. Position 221 (His221) interacts with substrate. Residues His248 and His274 each contribute to the Ni(2+) site. His322 serves as the catalytic Proton donor. Asp362 contributes to the Ni(2+) binding site. Residues Lys384–Asp403 form a disordered region.

The protein belongs to the metallo-dependent hydrolases superfamily. Urease alpha subunit family. In terms of assembly, heterotrimer of UreA (gamma), UreB (beta) and UreC (alpha) subunits. Three heterotrimers associate to form the active enzyme. Requires Ni cation as cofactor. In terms of processing, carboxylation allows a single lysine to coordinate two nickel ions.

It localises to the cytoplasm. It carries out the reaction urea + 2 H2O + H(+) = hydrogencarbonate + 2 NH4(+). Its pathway is nitrogen metabolism; urea degradation; CO(2) and NH(3) from urea (urease route): step 1/1. The protein is Urease subunit alpha of Prochlorococcus marinus (strain MIT 9313).